The sequence spans 372 residues: Y-box-binding protein 3 (372 aa).

Residues 1 to 82 are disordered; it reads MSEAGEATTT…LATAAGSEDA (82 aa). An N-acetylserine modification is found at S2. S2 is subject to Phosphoserine. The span at 7–28 shows a compositional bias: low complexity; the sequence is ATTTTTTTLPQAPTEAAAAAPQ. S34 bears the Phosphoserine mark. A compositionally biased stretch (low complexity) spans 35-79; sequence PVGSGAPQAAAPAPAAHVAGNPGGDAAPAATGTAAAASLATAAGS. The CSD domain occupies 93-157; the sequence is GTVKWFNVRN…GEKGAEAANV (65 aa). A phosphoserine mark is found at S134, S201, S203, and S204. Residues 181–372 form a disordered region; that stretch reads YYGRRRGPPR…APPTQQSSAE (192 aa). The segment covering 222–238 has biased composition (basic residues); sequence QLRRPQYRPQYRQRRFP. At R251 the chain carries Omega-N-methylarginine. Polar residues predominate over residues 314-324; that stretch reads QQATSGPNQPS. S324 carries the phosphoserine modification. R326 bears the Omega-N-methylarginine mark. Positions 327–340 are enriched in basic residues; the sequence is RGYRRPYNYRRRPR. 3 positions are modified to phosphoserine: S346, S369, and S370.

Found in a mRNP complex with YBX2. Interacts with RRP1B. Highly expressed in skeletal muscle and heart.

The protein resides in the cytoplasm. It is found in the nucleus. Its function is as follows. Binds to the GM-CSF promoter. Seems to act as a repressor. Also binds to full-length mRNA and to short RNA sequences containing the consensus site 5'-UCCAUCA-3'. May have a role in translation repression. This Homo sapiens (Human) protein is Y-box-binding protein 3 (YBX3).